A 2562-amino-acid chain; its full sequence is Zinc finger homeobox protein 2 (2562 aa).

Residues 1–13 (MATLNSASPSGTV) show a composition bias toward polar residues. 2 disordered regions span residues 1-88 (MATL…PPKD) and 337-410 (PSPP…DPPP). Residues 56 to 73 (GGERLESGSDLDPPKEIG) are compositionally biased toward basic and acidic residues. 2 consecutive C2H2-type zinc fingers follow at residues 446-469 (LKCPKCNWHYKYQQTLDVHMREKH) and 501-525 (YRCDVCNYSTTTKGNLSIHMQSDKH). Disordered regions lie at residues 530–559 (QGFQAGPGGQASPPEASLPPTSVGDKEPKT), 603–651 (PPGL…PDKP), and 669–705 (RKFPTAAPGSLSPETHLPPSQLLGSSSDGLPTSPSPD). The segment covering 609-622 (PGPPPPPGAAPTNP) has biased composition (pro residues). Residues 690–704 (LLGSSSDGLPTSPSP) are compositionally biased toward polar residues. C2H2-type zinc fingers lie at residues 752-776 (HRCKLCCYGTQLKANFQLHLKTDKH), 815-839 (LRCNICDFESNSKEKMQLHTRGSAH), and 864-888 (YHCLLCAWDTPSRLALLQHLRTPAH). The disordered stretch occupies residues 923–966 (RLQTPGKASDTPLAQPPTSEKDAQNKTEQQASEVTEDRSGPPRD). The C2H2-type 6 zinc finger occupies 1003–1026 (YRCPLCQEQLVGRPALHFHLSHLH). Disordered stretches follow at residues 1058 to 1126 (NPVE…PAPR) and 1140 to 1166 (MSEEEEGAMGEPRSAEPTPADSRHPLT). Pro residues-rich tracts occupy residues 1091–1101 (SPDPPLEPPLA) and 1114–1124 (DQPPSPAPSPA). 2 consecutive C2H2-type zinc fingers follow at residues 1185 to 1211 (YKCTVCKESFTQKNILLVHYNSVSHLH) and 1242 to 1266 (FKCTVCRVSYNQSSTLEIHMRSVLH). A compositionally biased stretch (basic and acidic residues) spans 1278–1305 (RAEGAERGQEEFKEGETEGEAGTEKKGP). Residues 1278–1313 (RAEGAERGQEEFKEGETEGEAGTEKKGPDPGGFMSG) form a disordered region. The C2H2-type 9 zinc finger occupies 1474 to 1497 (LACGACGKLFSNMLILKTHEEHVH). The segment at 1520–1584 (LYPPPVEPPK…EGSRGSLPPA (65 aa)) is disordered. Over residues 1521–1531 (YPPPVEPPKPP) the composition is skewed to pro residues. Positions 1589 to 1648 (RRFSRTKFTEFQTQALQSFFETSAYPKDGEVERLASLLGLASRVVVVWFQNARQKARKNA) form a DNA-binding region, homeobox 1. A C2H2-type 10; degenerate zinc finger spans residues 1664 to 1687 (SGCRRCHATFACVFELVRHLKKCY). Positions 1689-1760 (DQPPEEEEEA…EGKAPPSPPV (72 aa)) are disordered. Positions 1690-1713 (QPPEEEEEAERGEEEEEVEEEEAE) are enriched in acidic residues. Positions 1743 to 1752 (TRPESKESEG) are enriched in basic and acidic residues. Residues 1761 to 1783 (YACDQCAASFPSQDLLTTHHRLH) form a C2H2-type 11 zinc finger. 7 disordered regions span residues 1814–1853 (SGTSSVTGTPLKRKHDDGSLSPTGSEAGGGGEGEPPKDKR), 1907–1934 (RKGQFRSTPGGVAGPAVKPTVPPSPAPF), 1971–2057 (PLPF…DSMG), 2114–2136 (KKAKLQGTAPPGSGGSSEGTSAA), 2186–2210 (PAPETPLAPKGPPATTPASSVPLGA), 2263–2313 (QTAG…PNSS), and 2391–2429 (LQQPPQAPEPTATAPPKPPELPASGEGESSEADELLTGS). The segment at residues 1851 to 1910 (DKRLRTTILPEQLEILYRWYMQDSNPTRKMLDCISEEVGLKKRVVQVWFQNTRARERKGQ) is a DNA-binding region (homeobox 2). A compositionally biased stretch (pro residues) spans 1985-1996 (TPEPPPPLPPPA). A compositionally biased stretch (low complexity) spans 2008–2037 (KASPESEACSPSAGDLSDSSASSLAEPESP). Gly residues predominate over residues 2038 to 2051 (GAGGTSGGPGGGTG). A DNA-binding region (homeobox 3) is located at residues 2058–2117 (QRRYRTQMSSLQLKIMKACYEAYRTPTMQECEVLGEEIGLPKRVIQVWFQNARAKEKKAK). Pro residues predominate over residues 2188–2200 (PETPLAPKGPPAT). Over residues 2275-2286 (PVSNQTNSSTDP) the composition is skewed to polar residues. Over residues 2295–2305 (SGDKVSGERKP) the composition is skewed to basic and acidic residues. The segment covering 2395 to 2411 (PQAPEPTATAPPKPPEL) has biased composition (pro residues). Residues 2441 to 2461 (YLCRQCKMAFDGEAPATAHQR) form a C2H2-type 12; degenerate zinc finger. The segment at 2485 to 2509 (YHCLACEVLLSGREALASHLRSSAH) adopts a C2H2-type 13 zinc-finger fold. Disordered regions lie at residues 2506–2525 (SSAHRRKAAPPPGGPPITVT) and 2540–2562 (EEARLPHTDPNPKTTTTSTLLAL). The span at 2553–2562 (TTTTSTLLAL) shows a compositional bias: low complexity.

Expressed in brain (at protein level). Expressed at the highest levels in the pyramidal cell layer of the hippocampus, the suprachiasmatic nucleus, laterodorsal thalamic nucleus, lateral geniculate nucleus, substantia nigra pars compacta, and magnocellular part of the red nucleus (at protein level). Highly expressed in dorsal root ganglia. Expressed at lower levels in kidney, stomach, liver, heart and testis.

The protein localises to the nucleus. Transcriptional regulator that is critical for the regulation of pain perception and processing of noxious stimuli. The polypeptide is Zinc finger homeobox protein 2 (Mus musculus (Mouse)).